Reading from the N-terminus, the 396-residue chain is Tryptophan synthase beta chain (396 aa).

Lys-86 bears the N6-(pyridoxal phosphate)lysine mark.

It belongs to the TrpB family. In terms of assembly, tetramer of two alpha and two beta chains. Pyridoxal 5'-phosphate is required as a cofactor.

It catalyses the reaction (1S,2R)-1-C-(indol-3-yl)glycerol 3-phosphate + L-serine = D-glyceraldehyde 3-phosphate + L-tryptophan + H2O. Its pathway is amino-acid biosynthesis; L-tryptophan biosynthesis; L-tryptophan from chorismate: step 5/5. The beta subunit is responsible for the synthesis of L-tryptophan from indole and L-serine. The polypeptide is Tryptophan synthase beta chain (Francisella tularensis subsp. tularensis (strain FSC 198)).